Consider the following 295-residue polypeptide: tRNA dimethylallyltransferase (295 aa).

9–16 (GATATGKS) serves as a coordination point for ATP. 11–16 (TATGKS) lines the substrate pocket. Positions 34 to 37 (DSRQ) are interaction with substrate tRNA.

It belongs to the IPP transferase family. In terms of assembly, monomer. Requires Mg(2+) as cofactor.

The enzyme catalyses adenosine(37) in tRNA + dimethylallyl diphosphate = N(6)-dimethylallyladenosine(37) in tRNA + diphosphate. Its function is as follows. Catalyzes the transfer of a dimethylallyl group onto the adenine at position 37 in tRNAs that read codons beginning with uridine, leading to the formation of N6-(dimethylallyl)adenosine (i(6)A). The chain is tRNA dimethylallyltransferase from Nostoc sp. (strain PCC 7120 / SAG 25.82 / UTEX 2576).